Reading from the N-terminus, the 169-residue chain is Probable calcium-binding protein CML20 (169 aa).

Residues methionine 1 to glutamine 23 form a disordered region. 4 EF-hand domains span residues glutamine 23–glutamate 58, methionine 59–glutamate 94, aspartate 96–asparagine 131, and phenylalanine 132–glycine 167. Ca(2+) contacts are provided by aspartate 36, aspartate 38, serine 40, threonine 42, glutamate 47, aspartate 72, aspartate 74, serine 76, glutamate 83, aspartate 109, aspartate 111, asparagine 113, lysine 115, aspartate 120, aspartate 145, aspartate 147, aspartate 149, glutamate 151, and glutamate 156.

As to quaternary structure, interacts with TON1A and TON1B. Interacts with SAC3A and SAC3B. Interacts with UCH1 and UCH2.

Its function is as follows. Potential calcium sensor. The protein is Probable calcium-binding protein CML20 of Arabidopsis thaliana (Mouse-ear cress).